We begin with the raw amino-acid sequence, 160 residues long: MMPAKLQLDVLRTLQSSARHGTQTLKNSTFLERFHNNRIVFCLPFFLALFFVPVQKVLQHLCLRFTQVAPYFKIQLFDLPSRHAENLAPLLASCRIQYTNCFSSSSNGQVPSIISLYLRVDLSPFYAKIFQISYRVPMIWLDVFQVFFVFLVISQHSLHS.

The next 2 helical transmembrane spans lie at isoleucine 39 to glutamine 59 and valine 136 to histidine 156.

This sequence belongs to the UPF0479 family.

It is found in the membrane. The protein is Putative UPF0479 protein YIL177W-A of Saccharomyces cerevisiae (strain ATCC 204508 / S288c) (Baker's yeast).